Consider the following 440-residue polypeptide: Protein OSB3, chloroplastic/mitochondrial (440 aa).

Residues methionine 1–asparagine 61 constitute a chloroplast and mitochondrion transit peptide. Residues isoleucine 80–glutamine 178 form the SSB domain. 3 PDF region regions span residues tryptophan 218–glutamate 270, tryptophan 294–proline 342, and tryptophan 380–proline 428.

Expressed primarily in the female gametophyte and in the floral abscission zone.

Its subcellular location is the mitochondrion. The protein resides in the plastid. The protein localises to the chloroplast. In terms of biological role, binds single-stranded DNA. This chain is Protein OSB3, chloroplastic/mitochondrial (OSB3), found in Arabidopsis thaliana (Mouse-ear cress).